The following is a 474-amino-acid chain: Ribulose bisphosphate carboxylase large chain (474 aa).

Substrate contacts are provided by asparagine 122 and threonine 172. The Proton acceptor role is filled by lysine 174. Lysine 176 lines the substrate pocket. Mg(2+) contacts are provided by lysine 200, aspartate 202, and glutamate 203. The residue at position 200 (lysine 200) is an N6-carboxylysine. Histidine 293 acts as the Proton acceptor in catalysis. The substrate site is built by arginine 294, histidine 326, and serine 378.

Belongs to the RuBisCO large chain family. Type I subfamily. As to quaternary structure, heterohexadecamer of 8 large chains and 8 small chains; disulfide-linked. The disulfide link is formed within the large subunit homodimers. It depends on Mg(2+) as a cofactor. The disulfide bond which can form in the large chain dimeric partners within the hexadecamer appears to be associated with oxidative stress and protein turnover.

The protein resides in the carboxysome. It catalyses the reaction 2 (2R)-3-phosphoglycerate + 2 H(+) = D-ribulose 1,5-bisphosphate + CO2 + H2O. The catalysed reaction is D-ribulose 1,5-bisphosphate + O2 = 2-phosphoglycolate + (2R)-3-phosphoglycerate + 2 H(+). Functionally, ruBisCO catalyzes two reactions: the carboxylation of D-ribulose 1,5-bisphosphate, the primary event in carbon dioxide fixation, as well as the oxidative fragmentation of the pentose substrate in the photorespiration process. Both reactions occur simultaneously and in competition at the same active site. The protein is Ribulose bisphosphate carboxylase large chain of Synechococcus sp. (strain JA-2-3B'a(2-13)) (Cyanobacteria bacterium Yellowstone B-Prime).